The primary structure comprises 250 residues: DNA repair protein RecO (250 aa).

This sequence belongs to the RecO family.

Functionally, involved in DNA repair and RecF pathway recombination. The chain is DNA repair protein RecO from Lactobacillus helveticus (strain DPC 4571).